Consider the following 447-residue polypeptide: N-succinylarginine dihydrolase (447 aa).

Residues 21-30, Asn112, and 139-140 contribute to the substrate site; these read AGLAHGNVAS and HR. Residue Glu176 is part of the active site. Arg215 contributes to the substrate binding site. His251 is a catalytic residue. Residues Asp253 and Asn364 each coordinate substrate. The Nucleophile role is filled by Cys370.

It belongs to the succinylarginine dihydrolase family. In terms of assembly, homodimer.

The catalysed reaction is N(2)-succinyl-L-arginine + 2 H2O + 2 H(+) = N(2)-succinyl-L-ornithine + 2 NH4(+) + CO2. It functions in the pathway amino-acid degradation; L-arginine degradation via AST pathway; L-glutamate and succinate from L-arginine: step 2/5. Functionally, catalyzes the hydrolysis of N(2)-succinylarginine into N(2)-succinylornithine, ammonia and CO(2). The chain is N-succinylarginine dihydrolase from Chromohalobacter salexigens (strain ATCC BAA-138 / DSM 3043 / CIP 106854 / NCIMB 13768 / 1H11).